We begin with the raw amino-acid sequence, 431 residues long: Adenosylhomocysteinase (431 aa).

3 residues coordinate substrate: Thr56, Asp131, and Glu156. Residue 157 to 159 (TTT) coordinates NAD(+). 2 residues coordinate substrate: Lys186 and Asp190. Residues Asn191, 222–227 (GDVGKG), Glu243, 299–301 (IGH), and Asn345 contribute to the NAD(+) site.

This sequence belongs to the adenosylhomocysteinase family. Homotetramer. It depends on NAD(+) as a cofactor.

It carries out the reaction S-adenosyl-L-homocysteine + H2O = L-homocysteine + adenosine. It participates in amino-acid biosynthesis; L-homocysteine biosynthesis; L-homocysteine from S-adenosyl-L-homocysteine: step 1/1. Adenosylhomocysteine is a competitive inhibitor of S-adenosyl-L-methionine-dependent methyl transferase reactions; therefore adenosylhomocysteinase may play a key role in the control of methylations via regulation of the intracellular concentration of adenosylhomocysteine. In Dictyostelium discoideum (Social amoeba), this protein is Adenosylhomocysteinase (sahA).